The following is a 313-amino-acid chain: L-lactate dehydrogenase 1 (313 aa).

Residues V15, D36, K41, Y66, and 80–81 (GA) each bind NAD(+). Residues Q83 and R89 each contribute to the substrate site. NAD(+) contacts are provided by residues S102, 119–121 (VSN), and S144. A substrate-binding site is contributed by 121-124 (NPVD). A substrate-binding site is contributed by 149-152 (DTSR). The beta-D-fructose 1,6-bisphosphate site is built by R154 and H169. H176 serves as the catalytic Proton acceptor. Residue Y222 is modified to Phosphotyrosine. T231 contributes to the substrate binding site.

Belongs to the LDH/MDH superfamily. LDH family. Homotetramer.

It localises to the cytoplasm. It catalyses the reaction (S)-lactate + NAD(+) = pyruvate + NADH + H(+). Its pathway is fermentation; pyruvate fermentation to lactate; (S)-lactate from pyruvate: step 1/1. With respect to regulation, allosterically activated by fructose 1,6-bisphosphate (FBP). Its function is as follows. Catalyzes the conversion of lactate to pyruvate. This is L-lactate dehydrogenase 1 from Clostridium acetobutylicum (strain ATCC 824 / DSM 792 / JCM 1419 / IAM 19013 / LMG 5710 / NBRC 13948 / NRRL B-527 / VKM B-1787 / 2291 / W).